The chain runs to 796 residues: High affinity nerve growth factor receptor (796 aa).

A signal peptide spans 1 to 32 (MLRGGRRGQLGWHSWAAGPGSLLAWLILASAG). Over 33-423 (AAPCPDACCP…TPFGVSVAVG (391 aa)) the chain is Extracellular. 2 disulfides stabilise this stretch: Cys-36–Cys-41 and Cys-40–Cys-50. Asn-67, Asn-95, Asn-121, Asn-188, Asn-202, Asn-253, Asn-262, Asn-281, Asn-318, Asn-323, Asn-338, Asn-358, and Asn-401 each carry an N-linked (GlcNAc...) asparagine glycan. LRR repeat units lie at residues 90–113 (LGEL…AFHF) and 116–137 (RLSR…TVQG). The LRRCT domain maps to 148-193 (NPLHCSCALRWLQRWEEEGLGGVPEQKLQCHGQGPLAHMPNASCGV). An intrachain disulfide couples Cys-154 to Cys-191. Ig-like C2-type domains lie at 194–283 (PTLK…VNVS) and 299–365 (WCIP…LAAN). Cysteines 215 and 265 form a disulfide. A disulfide bond links Cys-300 and Cys-345. The chain crosses the membrane as a helical span at residues 424 to 439 (LAVFACLFLSTLLLVL). The Cytoplasmic segment spans residues 440–796 (NKCGRRNKFG…APPVYLDVLG (357 aa)). The interaction with SQSTM1 stretch occupies residues 469–490 (MTLGGSSLSPTEGKGSGLQGHI). Position 496 is a phosphotyrosine; by autocatalysis (Tyr-496). The Protein kinase domain maps to 510-781 (IVLKWELGEG…HSIKDVHARL (272 aa)). 516–524 (LGEGAFGKV) contacts ATP. A DXXLL motif is present at residues 537 to 541 (DKMLV). Lys-544 provides a ligand contact to ATP. The DXXLL signature appears at 607–611 (DAKLL). The active-site Proton acceptor is Asp-650. Phosphotyrosine; by autocatalysis occurs at positions 676, 680, 681, and 791.

It belongs to the protein kinase superfamily. Tyr protein kinase family. Insulin receptor subfamily. Exists in a dynamic equilibrium between monomeric (low affinity) and dimeric (high affinity) structures. Homodimerization is induced by binding of a NGF dimer. Interacts with SQSTM1; bridges NTRK1 to NGFR. Forms a ternary complex with NGFR and KIDINS220; this complex is affected by the expression levels of KIDINS220 and an increase in KIDINS220 expression leads to a decreased association of NGFR and NTRK1. Interacts with SH2D1A; regulates NTRK1. Interacts (phosphorylated upon activation by NGF) with SHC1; mediates SHC1 phosphorylation and activation. Interacts (phosphorylated upon activation by NGF) with PLCG1; mediates PLCG1 phosphorylation and activation. Interacts (phosphorylated) with SH2B1 and SH2B2. Interacts with GRB2. Interacts with PIK3R1. Interacts with FRS2. Interacts with SORT1; may regulate NTRK1 anterograde axonal transport. Interacts with RAB7A. Found in a complex, at least composed of KIDINS220, MAGI2, NTRK1 and RAPGEF2; the complex is mainly formed at late endosomes in a nerve growth factor (NGF)-dependent manner. Interacts with RAPGEF2; the interaction is strengthened after NGF stimulation. Interacts with PTPRS. Interacts with USP36; USP36 does not deubiquitinate NTRK1. Interacts with GGA3. Interacts with TSPAN1; this interaction promotes NTRK1 stability. Post-translationally, ligand-mediated autophosphorylation. Interaction with SQSTM1 is phosphotyrosine-dependent. Autophosphorylation at Tyr-496 mediates interaction and phosphorylation of SHC1. N-glycosylated. Isoform TrkA-I and isoform TrkA-II are N-glycosylated. In terms of processing, ubiquitinated. Undergoes polyubiquitination upon activation; regulated by NGFR. Ubiquitination by NEDD4L leads to degradation. Ubiquitination regulates the internalization of the receptor. In terms of tissue distribution, isoform TrkA-I is found in most non-neuronal tissues. Isoform TrkA-II is primarily expressed in neuronal cells. TrkA-III is specifically expressed by pluripotent neural stem and neural crest progenitors.

It is found in the cell membrane. The protein resides in the early endosome membrane. The protein localises to the late endosome membrane. It localises to the recycling endosome membrane. The enzyme catalyses L-tyrosyl-[protein] + ATP = O-phospho-L-tyrosyl-[protein] + ADP + H(+). The pro-survival signaling effect of NTRK1 in neurons requires its endocytosis into signaling early endosomes and its retrograde axonal transport. This is regulated by different proteins including CFL1, RAC1 and SORT1. NTF3 is unable to induce this signaling probably due to the lability of the NTF3-NTRK1 complex in endosomes. SH2D1A inhibits the autophosphorylation of the receptor, and alters the recruitment and activation of downstream effectors and signaling cascades. Regulated by NGFR. In terms of biological role, receptor tyrosine kinase involved in the development and the maturation of the central and peripheral nervous systems through regulation of proliferation, differentiation and survival of sympathetic and nervous neurons. High affinity receptor for NGF which is its primary ligand. Can also bind and be activated by NTF3/neurotrophin-3. However, NTF3 only supports axonal extension through NTRK1 but has no effect on neuron survival. Upon dimeric NGF ligand-binding, undergoes homodimerization, autophosphorylation and activation. Recruits, phosphorylates and/or activates several downstream effectors including SHC1, FRS2, SH2B1, SH2B2 and PLCG1 that regulate distinct overlapping signaling cascades driving cell survival and differentiation. Through SHC1 and FRS2 activates a GRB2-Ras-MAPK cascade that regulates cell differentiation and survival. Through PLCG1 controls NF-Kappa-B activation and the transcription of genes involved in cell survival. Through SHC1 and SH2B1 controls a Ras-PI3 kinase-AKT1 signaling cascade that is also regulating survival. In absence of ligand and activation, may promote cell death, making the survival of neurons dependent on trophic factors. Functionally, resistant to NGF, it constitutively activates AKT1 and NF-kappa-B and is unable to activate the Ras-MAPK signaling cascade. Antagonizes the anti-proliferative NGF-NTRK1 signaling that promotes neuronal precursors differentiation. Isoform TrkA-III promotes angiogenesis and has oncogenic activity when overexpressed. The chain is High affinity nerve growth factor receptor (NTRK1) from Homo sapiens (Human).